The chain runs to 68 residues: ATP-dependent 6-phosphofructokinase (68 aa).

17–20 (GDGT) serves as a coordination point for ATP. Aspartate 18 lines the Mg(2+) pocket. The active-site Proton acceptor is aspartate 48.

It belongs to the phosphofructokinase type A (PFKA) family. PPi-dependent PFK group II subfamily. Atypical ATP-dependent clade 'X' sub-subfamily. Homotetramer. The cofactor is Mg(2+).

The protein resides in the cytoplasm. It carries out the reaction beta-D-fructose 6-phosphate + ATP = beta-D-fructose 1,6-bisphosphate + ADP + H(+). It participates in carbohydrate degradation; glycolysis; D-glyceraldehyde 3-phosphate and glycerone phosphate from D-glucose: step 3/4. Allosterically activated by AMP. Catalyzes the phosphorylation of D-fructose 6-phosphate to fructose 1,6-bisphosphate by ATP, the first committing step of glycolysis. The polypeptide is ATP-dependent 6-phosphofructokinase (PFK) (Triticum aestivum (Wheat)).